Here is a 38-residue protein sequence, read N- to C-terminus: Large ribosomal subunit protein bL36 (38 aa).

It belongs to the bacterial ribosomal protein bL36 family.

The protein is Large ribosomal subunit protein bL36 of Synechococcus sp. (strain JA-2-3B'a(2-13)) (Cyanobacteria bacterium Yellowstone B-Prime).